The chain runs to 672 residues: uncharacterized protein (672 aa).

Basic and acidic residues predominate over residues 1–10 (MAKSDGDDPL). The tract at residues 1–40 (MAKSDGDDPLRPASPRLRSSRRHSLRYSAYTGGPDPLAPP) is disordered.

This is an uncharacterized protein from Mycobacterium tuberculosis (strain CDC 1551 / Oshkosh).